The chain runs to 229 residues: Ribonuclease S-6 (229 aa).

The first 27 residues, 1–27, serve as a signal peptide directing secretion; that stretch reads MGITGMIYMVPMVFSLIVLISCSSTMG. Gln-36 provides a ligand contact to RNA. A disulfide bond links Cys-42 and Cys-49. An RNA-binding site is contributed by His-60. His-60 serves as the catalytic Proton donor. An intrachain disulfide couples Cys-75 to Cys-119. N-linked (GlcNAc) asparagine glycans are attached at residues Asn-77 and Asn-87. Residues 98–99, Phe-108, 111–112, and 115–116 contribute to the RNA site; these read NV, RQ, and KH. Residue Gln-112 is part of the active site. The active-site Proton acceptor is His-116. Asn-145 is a glycosylation site (N-linked (GlcNAc...) (high mannose) asparagine). Disulfide bonds link Cys-184/Cys-222 and Cys-199/Cys-210. Asn-188 is a glycosylation site (N-linked (GlcNAc) asparagine; alternate). N-linked (GlcNAc...) asparagine; alternate glycans are attached at residues Asn-188 and Asn-203.

The protein belongs to the RNase T2 family. In terms of processing, the N-glycans attached at Asn-188 and Asn-203 consist of either monosaccharide (GlcNAc) or disaccharide (GlcNAc-GlcNAc) that could not be distinguished.

It catalyses the reaction a ribonucleotidyl-ribonucleotide-RNA + H2O = a 3'-end 3'-phospho-ribonucleotide-RNA + a 5'-end dephospho-ribonucleoside-RNA + H(+). In terms of biological role, self-incompatibility (SI) is the inherited ability of a flowering plant to prevent self-fertilization by discriminating between self and non-self pollen during pollination. In many species, self-incompatibility is controlled by the single, multiallelic locus S. This chain is Ribonuclease S-6, found in Pyrus pyrifolia (Chinese pear).